Here is a 525-residue protein sequence, read N- to C-terminus: GMP synthase [glutamine-hydrolyzing] (525 aa).

The region spanning Arg9–Leu207 is the Glutamine amidotransferase type-1 domain. The active-site Nucleophile is the Cys86. Residues His181 and Glu183 contribute to the active site. Residues Trp208–Arg400 form the GMPS ATP-PPase domain. Position 235 to 241 (Ser235 to Ser241) interacts with ATP.

As to quaternary structure, homodimer.

The enzyme catalyses XMP + L-glutamine + ATP + H2O = GMP + L-glutamate + AMP + diphosphate + 2 H(+). It participates in purine metabolism; GMP biosynthesis; GMP from XMP (L-Gln route): step 1/1. Functionally, catalyzes the synthesis of GMP from XMP. This Cellvibrio japonicus (strain Ueda107) (Pseudomonas fluorescens subsp. cellulosa) protein is GMP synthase [glutamine-hydrolyzing].